The primary structure comprises 203 residues: Dual-action ribosomal maturation protein DarP (203 aa).

2 disordered regions span residues M1–K31 and N178–A203. The span at G21–K31 shows a compositional bias: basic and acidic residues. The segment covering S188 to A203 has biased composition (acidic residues).

The protein belongs to the DarP family.

Its subcellular location is the cytoplasm. In terms of biological role, member of a network of 50S ribosomal subunit biogenesis factors which assembles along the 30S-50S interface, preventing incorrect 23S rRNA structures from forming. Promotes peptidyl transferase center (PTC) maturation. In Paraburkholderia xenovorans (strain LB400), this protein is Dual-action ribosomal maturation protein DarP.